The chain runs to 337 residues: MAQETAPPCGPVSRGDSPIIEKMEKRTCALCPEGHEWSQIYFSPSGNIVAHENCLLYSSGLVECETLDLRNTIRNFDVKSVKKEIWRGRRLKCSFCNKGGATVGCDLWFCKKSYHYVCAKKDQAILQVDGNHGTYKLFCPEHSPEQEEATESADDPSMKKKRGKNKRLSSGPPAQPKTMKCSNAKRHMTEEPHGHTDAAVKSPFLKKCQEAGLLTELFEHILENMDSVHGRLVDETASESDYEGIETLLFDCGLFKDTLRKFQEVIKSKACEWEERQRQMKQQLEALADLQQSLCSFQENGDLDCSSSTSGSLLPPEDHQVRSQESPEVQAGSGDSL.

Residues K25–L61 form a C2HC pre-PHD-type zinc finger. Residues L91–S143 form a PHD-type zinc finger. Disordered regions lie at residues E145–T196 and G301–L337. Positions H187 to T196 are enriched in basic and acidic residues. 2 stretches are compositionally biased toward polar residues: residues G301–S312 and S323–L337.

Interacts with BRCA1 and RELA.

Its subcellular location is the nucleus. In terms of biological role, positive regulator of Th1-type cytokine gene expression. This is PHD finger protein 11 (Phf11) from Mus musculus (Mouse).